The following is a 359-amino-acid chain: 2-epi-5-epi-valiolone 7-kinase (359 aa).

The tract at residues 28 to 48 is disordered; it reads GGLGEVHTTPSPGHARRPGAG.

The protein belongs to the ROK (NagC/XylR) family.

The catalysed reaction is 2-epi-5-epi-valiolone + ATP = 2-epi-5-epi-valiolone 7-phosphate + ADP + H(+). Its function is as follows. Catalyzes the conversion of 2-epi-5-epi-valiolone to 2-epi-5-epi-valiolone 7-phosphate. Involved in the biosynthesis of the acarviose moiety of the alpha-glucosidase inhibitor acarbose. The sequence is that of 2-epi-5-epi-valiolone 7-kinase from Actinoplanes sp. (strain ATCC 31044 / CBS 674.73 / SE50/110).